The following is a 441-amino-acid chain: MTGSLWLSLALSLAVLAQFKVSAAPNLVCFYDSQGFQRQGLAQFSMTDMELALQFCTHLVYGYAGVNADNYEMQSINKRLDLEQRHLAQVSSLKERYPHIKFLLSVGGDADTNEGNQYIKLLESGQQGHRRFIESARDLVRRYNFDGLDLALQLPRNKPRKVHGDVGSAWKSFKKFFTGDFIVDTDSETHKGQVTALIKDLSAALKQNDLLLSLTVLPNVNSSWYYDAPSIAPSLDFINLGTFDFLTPQRNPEEADFSAPTYEAVGQNRLGHYNLNFQTEHWLLQRVPANKINIGIATYGRTWKMTKDSGDSGMPVVPSTQGPAPAGPQSKKEGLLNWAEICSLMPNPGNTNARGPSAPVKRVLDPTKRYGSYAFRAADENGDHGLWISYDDPDSASSKAMFARVRNLGGVALFDLTQDDFRGQCTNDRFPMLRAIKYRLL.

The signal sequence occupies residues 1–23; the sequence is MTGSLWLSLALSLAVLAQFKVSA. In terms of domain architecture, GH18 spans 25-441; that stretch reads PNLVCFYDSQ…MLRAIKYRLL (417 aa). C29 and C56 are disulfide-bonded. N221 is a glycosylation site (N-linked (GlcNAc...) asparagine). Residues 309–331 are disordered; it reads SGDSGMPVVPSTQGPAPAGPQSK. C342 and C425 are oxidised to a cystine.

It belongs to the glycosyl hydrolase 18 family. IDGF subfamily. In terms of processing, glycosylated.

Its subcellular location is the secreted. Functionally, cooperates with insulin-like peptides to stimulate the proliferation, polarization and motility of imaginal disk cells. May act by stabilizing the binding of insulin-like peptides to its receptor through a simultaneous interaction with both molecules to form a multiprotein signaling complex. This Drosophila yakuba (Fruit fly) protein is Chitinase-like protein Idgf3 (Idgf3).